The following is an 85-amino-acid chain: Glutaredoxin 1 (85 aa).

In terms of domain architecture, Glutaredoxin spans 1-85; that stretch reads MQTVIFGRSG…AAWVKENLDA (85 aa). Cysteines 11 and 14 form a disulfide.

This sequence belongs to the glutaredoxin family. In terms of assembly, monomer.

Functionally, the disulfide bond functions as an electron carrier in the glutathione-dependent synthesis of deoxyribonucleotides by the enzyme ribonucleotide reductase. In addition, it is also involved in reducing some disulfides in a coupled system with glutathione reductase. The polypeptide is Glutaredoxin 1 (grxA) (Shigella flexneri).